We begin with the raw amino-acid sequence, 630 residues long: Scarecrow-like protein 34 (630 aa).

The 389-residue stretch at 240–628 folds into the GRAS domain; the sequence is KKKKSQVVDF…RTLYASSCWV (389 aa). The leucine repeat I (LRI) stretch occupies residues 247–312; sequence VDFRTLLTHC…GSTGPMIQTY (66 aa). Residues 331 to 396 form a VHIID region; sequence YRVYLSSSPF…DVPRKLRITG (66 aa). The short motif at 362 to 366 is the VHIID element; it reads LHIVD. Positions 412–444 are leucine repeat II (LRII); it reads ETGRRLAEYCKRFNVPFEYKAIASQNWETIRIE. A PFYRE region spans residues 454–549; it reads LAVNAGLRLK…REFYGREAMN (96 aa). Residues 552 to 628 are SAW; the sequence is ACEEADRVER…RTLYASSCWV (77 aa).

It belongs to the GRAS family.

The protein localises to the nucleus. In terms of biological role, probable transcription factor involved in plant development. In Arabidopsis thaliana (Mouse-ear cress), this protein is Scarecrow-like protein 34 (SCL34).